Reading from the N-terminus, the 199-residue chain is uncharacterized protein (199 aa).

The next 6 helical transmembrane spans lie at M1–F21, I28–Y48, L51–M71, L83–I103, Q127–Q147, and A154–I174.

The protein resides in the cell membrane. This is an uncharacterized protein from Bacillus subtilis (strain 168).